A 390-amino-acid chain; its full sequence is MAAAILLRRVPPARAQATALIAARSISDSTAPLTIETSVPFTSHIVDPPSRDVTTTPAELLTFFRDMSVMRRMEIAADSLYKAKLIRGFCHLYDGQEAVAVGMEAAITRSDSIITAYRDHCTYLARGGDLVSAFAELMGRQAGCSRGKGGSMHFYKKDANFYGGHGIVGAQVPLGCGLAFAQKYRKEETATFALYGDGAANQGQLFEALNISALWKLPAILVCENNHYGMGTAEWRAAKSPAYYKRGDYVPGLKVDGMDVLAVKQACKFAKEHAIANGPIVLEMDTYRYHGHSMSDPGSTYRTRDEISGVRQERDPIERVRKLILAHDLATAAELKDMEKEIRKEVDDAIAKAKESPMPDTSELFTNVYVKGFGVESFGADRKELRATLP.

Residues 1-15 (MAAAILLRRVPPARA) constitute a mitochondrion transit peptide. Pyruvate contacts are provided by H91, Y117, R118, G166, V168, D197, G198, A199, N226, and Y228. The thiamine diphosphate site is built by Y117, R118, G166, V168, D197, G198, A199, and N226. Position 197 (D197) interacts with Mg(2+). Mg(2+) is bound by residues N226 and Y228. Residue H292 coordinates thiamine diphosphate. The disordered stretch occupies residues 293-312 (SMSDPGSTYRTRDEISGVRQ). Positions 302 to 312 (RTRDEISGVRQ) are enriched in basic and acidic residues.

Tetramer of 2 alpha and 2 beta subunits. The cofactor is thiamine diphosphate. Mg(2+) is required as a cofactor.

It is found in the mitochondrion matrix. It catalyses the reaction N(6)-[(R)-lipoyl]-L-lysyl-[protein] + pyruvate + H(+) = N(6)-[(R)-S(8)-acetyldihydrolipoyl]-L-lysyl-[protein] + CO2. Functionally, the pyruvate dehydrogenase complex catalyzes the overall conversion of pyruvate to acetyl-CoA and CO(2). It contains multiple copies of three enzymatic components: pyruvate dehydrogenase (E1), dihydrolipoamide acetyltransferase (E2) and lipoamide dehydrogenase (E3). In Oryza sativa subsp. japonica (Rice), this protein is Pyruvate dehydrogenase E1 component subunit alpha-1, mitochondrial.